We begin with the raw amino-acid sequence, 2442 residues long: Centrosome-associated protein CEP250 (2442 aa).

Coiled coils occupy residues 95–158 (NLDE…KESQ), 244–352 (AQLL…TQVM), 395–1172 (LTRR…EQQP), and 1243–2227 (SALH…KERL). Basic and acidic residues-rich tracts occupy residues 1273 to 1289 (LTDT…ELQD) and 1699 to 1715 (LTTQ…EGKG). 3 disordered regions span residues 1273 to 1308 (LTDT…EGKQ), 1699 to 1725 (LTTQ…GSLE), and 1820 to 1839 (EALQ…VKEK). Residues 1820 to 1831 (EALQQEQQQAQG) are compositionally biased toward low complexity. Ser2138 carries the phosphoserine modification. Phosphothreonine is present on Thr2218. Residues 2223-2244 (EKERLHSPGATSTAELGSRGEQ) form a disordered region. Ser2229, Ser2252, and Ser2322 each carry phosphoserine. The stretch at 2262 to 2376 (GMEKQSWRQR…RKQKQDYITR (115 aa)) forms a coiled coil. Disordered stretches follow at residues 2307 to 2345 (RRKL…KNSD) and 2416 to 2442 (ESLT…AASR). The segment covering 2328 to 2338 (ATASSPTQQDG) has biased composition (polar residues). Phosphoserine; by NEK2 occurs at positions 2417 and 2421. Residues 2433-2442 (SPSTTQAASR) are compositionally biased toward polar residues.

Monomer and homodimer. Forms a complex in vitro with both NEK2 kinase and the PPP1CC catalytic subunit of protein phosphatase 1 (PP1). Interacts with CEP135. Interacts with CROCC/rootletin. Interacts with CNTLN. Interacts with NIN (via C-terminus). Interacts with CCDC102B (via N-terminus); the interaction results in recruitment of CCDC102B to the proximal ends of centrioles. Post-translationally, differentially phosphorylated during cell cycle. Phosphorylation may regulate association/dissociation from centrosome. During M phase of mitosis, C-terminal part is phosphorylated by NEK2, suggesting that it may trigger the dissociation from the mitotic centrosome. Dephosphorylated in vitro by the PP1 phosphatase. As to expression, ubiquitously and weakly expressed.

The protein localises to the cytoplasm. It localises to the perinuclear region. It is found in the cytoskeleton. Its subcellular location is the microtubule organizing center. The protein resides in the centrosome. The protein localises to the centriole. It localises to the cilium basal body. It is found in the cell projection. Its subcellular location is the cilium. The protein resides in the photoreceptor outer segment. The protein localises to the photoreceptor inner segment. Functionally, plays an important role in centrosome cohesion during interphase. Recruits CCDC102B to the proximal ends of centrioles. Maintains centrosome cohesion by forming intercentriolar linkages. Accumulates at the proximal end of each centriole, forming supramolecular assemblies with viscous material properties that promote organelle cohesion. May be involved in ciliogenesis. In Homo sapiens (Human), this protein is Centrosome-associated protein CEP250 (CEP250).